The sequence spans 427 residues: Probable threonylcarbamoyladenosine tRNA methylthiotransferase (427 aa).

The 107-residue stretch at 12–118 folds into the MTTase N-terminal domain; sequence MRVYVEGYGC…AGEILKNYVE (107 aa). The [4Fe-4S] cluster site is built by Cys-21, Cys-57, Cys-86, Cys-155, Cys-159, and Cys-162. A Radical SAM core domain is found at 141 to 370; it reads LKPSLITPLP…DKLRRELSYL (230 aa). In terms of domain architecture, TRAM spans 373–427; the sequence is KKYIGKAMKVLVLDEGKGYTDNFKVVKFEGGEVGEFRKVKITDAKTFGLKGELIL.

The protein belongs to the methylthiotransferase family. CDKAL1 subfamily. [4Fe-4S] cluster serves as cofactor.

It catalyses the reaction N(6)-L-threonylcarbamoyladenosine(37) in tRNA + (sulfur carrier)-SH + AH2 + 2 S-adenosyl-L-methionine = 2-methylsulfanyl-N(6)-L-threonylcarbamoyladenosine(37) in tRNA + (sulfur carrier)-H + 5'-deoxyadenosine + L-methionine + A + S-adenosyl-L-homocysteine + 2 H(+). Its function is as follows. Catalyzes the methylthiolation of N6-threonylcarbamoyladenosine (t(6)A), leading to the formation of 2-methylthio-N6-threonylcarbamoyladenosine (ms(2)t(6)A) at position 37 in tRNAs that read codons beginning with adenine. In Methanocaldococcus jannaschii (strain ATCC 43067 / DSM 2661 / JAL-1 / JCM 10045 / NBRC 100440) (Methanococcus jannaschii), this protein is Probable threonylcarbamoyladenosine tRNA methylthiotransferase.